A 308-amino-acid polypeptide reads, in one-letter code: Acetyl-coenzyme A carboxylase carboxyl transferase subunit alpha (308 aa).

Residues 36–286 form the CoA carboxyltransferase C-terminal domain; it reads ELEKEVSSVY…ESYFLKAFEE (251 aa).

It belongs to the AccA family. Acetyl-CoA carboxylase is a heterohexamer composed of biotin carboxyl carrier protein (AccB), biotin carboxylase (AccC) and two subunits each of ACCase subunit alpha (AccA) and ACCase subunit beta (AccD).

The protein resides in the cytoplasm. It catalyses the reaction N(6)-carboxybiotinyl-L-lysyl-[protein] + acetyl-CoA = N(6)-biotinyl-L-lysyl-[protein] + malonyl-CoA. It functions in the pathway lipid metabolism; malonyl-CoA biosynthesis; malonyl-CoA from acetyl-CoA: step 1/1. Component of the acetyl coenzyme A carboxylase (ACC) complex. First, biotin carboxylase catalyzes the carboxylation of biotin on its carrier protein (BCCP) and then the CO(2) group is transferred by the carboxyltransferase to acetyl-CoA to form malonyl-CoA. The chain is Acetyl-coenzyme A carboxylase carboxyl transferase subunit alpha from Helicobacter hepaticus (strain ATCC 51449 / 3B1).